The sequence spans 436 residues: 3-ketoacyl-CoA thiolase (436 aa).

The Acyl-thioester intermediate role is filled by Cys-99. Active-site proton acceptor residues include His-392 and Cys-422.

Belongs to the thiolase-like superfamily. Thiolase family. Heterotetramer of two alpha chains (FadJ) and two beta chains (FadI).

The protein resides in the cytoplasm. The catalysed reaction is an acyl-CoA + acetyl-CoA = a 3-oxoacyl-CoA + CoA. It participates in lipid metabolism; fatty acid beta-oxidation. Its function is as follows. Catalyzes the final step of fatty acid oxidation in which acetyl-CoA is released and the CoA ester of a fatty acid two carbons shorter is formed. This is 3-ketoacyl-CoA thiolase from Escherichia coli (strain K12 / MC4100 / BW2952).